The sequence spans 803 residues: Protein AMEIOTIC 1 homolog (803 aa).

Disordered regions lie at residues 21–64 (RPQV…QSLS) and 264–333 (RLRQ…RWSA). Residues 39–50 (NGKDDANHDESK) show a composition bias toward basic and acidic residues. Residues 51–64 (NQSPGLPLSRQSLS) are compositionally biased toward polar residues. Basic and acidic residues predominate over residues 283–295 (KREEAESSMDKSR). The segment covering 296–313 (AARKKKAKTYKSPKKVEK) has biased composition (basic residues). Positions 314–333 (RRVVEAKDGDPRRGKDRWSA) are enriched in basic and acidic residues. Positions 450–567 (VKKKVEELAE…SSFLSLKEQL (118 aa)) form a coiled coil. The tract at residues 651-688 (ISGGGSSSCPVASGPEQLPRSSSCPSIGPGGLPPSSRA) is disordered.

The protein localises to the nucleus. It localises to the chromosome. Its function is as follows. Plays a fundamental role in building the proper chromosome structure at the beginning of meiosis in male meiocytes. Required for the transition from leptotene to zygotene in meiocytes. Required for homologous chromosome pairing. The polypeptide is Protein AMEIOTIC 1 homolog (Oryza sativa subsp. japonica (Rice)).